A 261-amino-acid polypeptide reads, in one-letter code: uncharacterized protein (261 aa).

The N-terminal stretch at 1 to 22 is a signal peptide; that stretch reads MIHSKKLTLGICLVLLIILIGG. Residue C23 is the site of N-palmitoyl cysteine attachment. C23 carries the S-diacylglycerol cysteine lipid modification.

It belongs to the staphylococcal tandem lipoprotein family.

The protein localises to the cell membrane. This is an uncharacterized protein from Staphylococcus aureus (strain USA300).